Here is a 150-residue protein sequence, read N- to C-terminus: Large ribosomal subunit protein bL9 (150 aa).

Belongs to the bacterial ribosomal protein bL9 family.

Its function is as follows. Binds to the 23S rRNA. The sequence is that of Large ribosomal subunit protein bL9 from Lactococcus lactis subsp. cremoris (strain MG1363).